Reading from the N-terminus, the 464-residue chain is Arginine biosynthesis bifunctional protein ArgJ, mitochondrial (464 aa).

A mitochondrion-targeting transit peptide spans Met1 to Tyr22. 6 residues coordinate substrate: Thr193, Lys222, Thr233, Glu320, Asn459, and Thr464. The active-site Nucleophile is the Thr233.

It belongs to the ArgJ family. In terms of assembly, heterodimer of an alpha and a beta chain. The alpha and beta chains are autoproteolytically processed from a single precursor protein within the mitochondrion.

The protein resides in the mitochondrion matrix. The enzyme catalyses N(2)-acetyl-L-ornithine + L-glutamate = N-acetyl-L-glutamate + L-ornithine. The catalysed reaction is L-glutamate + acetyl-CoA = N-acetyl-L-glutamate + CoA + H(+). It participates in amino-acid biosynthesis; L-arginine biosynthesis; L-ornithine and N-acetyl-L-glutamate from L-glutamate and N(2)-acetyl-L-ornithine (cyclic): step 1/1. It functions in the pathway amino-acid biosynthesis; L-arginine biosynthesis; N(2)-acetyl-L-ornithine from L-glutamate: step 1/4. Functionally, catalyzes two activities which are involved in the cyclic version of arginine biosynthesis: the synthesis of acetylglutamate from glutamate and acetyl-CoA, and of ornithine by transacetylation between acetylornithine and glutamate. In Verticillium alfalfae (strain VaMs.102 / ATCC MYA-4576 / FGSC 10136) (Verticillium wilt of alfalfa), this protein is Arginine biosynthesis bifunctional protein ArgJ, mitochondrial.